The following is a 188-amino-acid chain: Elongation factor P (188 aa).

Residue lysine 34 is modified to N6-(3,6-diaminohexanoyl)-5-hydroxylysine.

Belongs to the elongation factor P family. In terms of processing, may be beta-lysylated on the epsilon-amino group of Lys-34 by the combined action of EpmA and EpmB, and then hydroxylated on the C5 position of the same residue by EpmC (if this protein is present). Lysylation is critical for the stimulatory effect of EF-P on peptide-bond formation. The lysylation moiety may extend toward the peptidyltransferase center and stabilize the terminal 3-CCA end of the tRNA. Hydroxylation of the C5 position on Lys-34 may allow additional potential stabilizing hydrogen-bond interactions with the P-tRNA.

It localises to the cytoplasm. It functions in the pathway protein biosynthesis; polypeptide chain elongation. Involved in peptide bond synthesis. Alleviates ribosome stalling that occurs when 3 or more consecutive Pro residues or the sequence PPG is present in a protein, possibly by augmenting the peptidyl transferase activity of the ribosome. Modification of Lys-34 is required for alleviation. In Haemophilus influenzae (strain 86-028NP), this protein is Elongation factor P.